Reading from the N-terminus, the 160-residue chain is Class B acid phosphatase (160 aa).

Positions 1–23 (MRKVTLTLSAIALALSLNGAAMA) are cleaved as a signal peptide. The Nucleophile role is filled by aspartate 69. Positions 69 and 71 each coordinate Mg(2+). Catalysis depends on aspartate 71, which acts as the Proton donor. A substrate-binding site is contributed by 137–138 (TG).

This sequence belongs to the class B bacterial acid phosphatase family. As to quaternary structure, homotetramer. The cofactor is Mg(2+).

Its subcellular location is the periplasm. It carries out the reaction a phosphate monoester + H2O = an alcohol + phosphate. Functionally, dephosphorylates several organic phosphate monoesters. Also has a phosphotransferase activity catalyzing the transfer of low-energy phosphate groups from organic phosphate monoesters to free hydroxyl groups of various organic compounds. The sequence is that of Class B acid phosphatase (aphA) from Proteus mirabilis.